The chain runs to 115 residues: Large ribosomal subunit protein uL18 (115 aa).

Positions 1–24 (MISKPDKNKLRQKRHTRVRGKISG) are disordered. The segment covering 10-20 (LRQKRHTRVRG) has biased composition (basic residues).

This sequence belongs to the universal ribosomal protein uL18 family. As to quaternary structure, part of the 50S ribosomal subunit; part of the 5S rRNA/L5/L18/L25 subcomplex. Contacts the 5S and 23S rRNAs.

Functionally, this is one of the proteins that bind and probably mediate the attachment of the 5S RNA into the large ribosomal subunit, where it forms part of the central protuberance. The protein is Large ribosomal subunit protein uL18 of Lactococcus lactis subsp. cremoris (strain MG1363).